The following is a 571-amino-acid chain: Urease subunit alpha (571 aa).

The Urease domain maps to 133 to 571; the sequence is GGIDTHVHFV…LPLTQRYFLF (439 aa). 3 residues coordinate Ni(2+): His-138, His-140, and Lys-221. Lys-221 bears the N6-carboxylysine mark. Substrate is bound at residue His-223. Ni(2+) is bound by residues His-250 and His-276. The active-site Proton donor is His-324. Position 364 (Asp-364) interacts with Ni(2+).

Belongs to the metallo-dependent hydrolases superfamily. Urease alpha subunit family. In terms of assembly, heterotrimer of UreA (gamma), UreB (beta) and UreC (alpha) subunits. Three heterotrimers associate to form the active enzyme. Requires Ni cation as cofactor. In terms of processing, carboxylation allows a single lysine to coordinate two nickel ions.

The protein resides in the cytoplasm. It carries out the reaction urea + 2 H2O + H(+) = hydrogencarbonate + 2 NH4(+). Its pathway is nitrogen metabolism; urea degradation; CO(2) and NH(3) from urea (urease route): step 1/1. The protein is Urease subunit alpha of Staphylococcus xylosus.